The primary structure comprises 602 residues: Elongation factor 4 (602 aa).

Residues 7-188 enclose the tr-type G domain; the sequence is ENIRNFSIIA…SIIRLVPPPK (182 aa). GTP-binding positions include 19 to 24 and 135 to 138; these read DHGKST and NKID.

It belongs to the TRAFAC class translation factor GTPase superfamily. Classic translation factor GTPase family. LepA subfamily.

It is found in the cell inner membrane. It carries out the reaction GTP + H2O = GDP + phosphate + H(+). Functionally, required for accurate and efficient protein synthesis under certain stress conditions. May act as a fidelity factor of the translation reaction, by catalyzing a one-codon backward translocation of tRNAs on improperly translocated ribosomes. Back-translocation proceeds from a post-translocation (POST) complex to a pre-translocation (PRE) complex, thus giving elongation factor G a second chance to translocate the tRNAs correctly. Binds to ribosomes in a GTP-dependent manner. The polypeptide is Elongation factor 4 (Chlamydia muridarum (strain MoPn / Nigg)).